Here is a 311-residue protein sequence, read N- to C-terminus: Probable deoxyhypusine synthase (311 aa).

Lys-284 acts as the Nucleophile in catalysis.

This sequence belongs to the deoxyhypusine synthase family. Requires NAD(+) as cofactor.

It catalyses the reaction [eIF5A protein]-L-lysine + spermidine = [eIF5A protein]-deoxyhypusine + propane-1,3-diamine. It functions in the pathway protein modification; eIF5A hypusination. Its function is as follows. Catalyzes the NAD-dependent oxidative cleavage of spermidine and the subsequent transfer of the butylamine moiety of spermidine to the epsilon-amino group of a specific lysine residue of the eIF-5A precursor protein to form the intermediate deoxyhypusine residue. This is Probable deoxyhypusine synthase (dys) from Sulfurisphaera tokodaii (strain DSM 16993 / JCM 10545 / NBRC 100140 / 7) (Sulfolobus tokodaii).